The following is a 125-amino-acid chain: Small ribosomal subunit protein uS13 (125 aa).

The span at 94–116 (GLPVRGQRTRTNARTRKGPRKAV) shows a compositional bias: basic residues. A disordered region spans residues 94 to 125 (GLPVRGQRTRTNARTRKGPRKAVRASSAKAGR).

The protein belongs to the universal ribosomal protein uS13 family. In terms of assembly, part of the 30S ribosomal subunit. Forms a loose heterodimer with protein S19. Forms two bridges to the 50S subunit in the 70S ribosome.

Functionally, located at the top of the head of the 30S subunit, it contacts several helices of the 16S rRNA. In the 70S ribosome it contacts the 23S rRNA (bridge B1a) and protein L5 of the 50S subunit (bridge B1b), connecting the 2 subunits; these bridges are implicated in subunit movement. Contacts the tRNAs in the A and P-sites. This Nitrosospira multiformis (strain ATCC 25196 / NCIMB 11849 / C 71) protein is Small ribosomal subunit protein uS13.